A 708-amino-acid polypeptide reads, in one-letter code: tRNA 5-methylaminomethyl-2-thiouridine biosynthesis bifunctional protein MnmC (708 aa).

The tRNA (mnm(5)s(2)U34)-methyltransferase stretch occupies residues 1 to 278; that stretch reads MTAEPNKPCQ…ERQVLRQQDA (278 aa). The interval 301–708 is FAD-dependent cmnm(5)s(2)U34 oxidoreductase; sequence IGGGLASAHL…LRKLLKGKAL (408 aa).

In the N-terminal section; belongs to the methyltransferase superfamily. tRNA (mnm(5)s(2)U34)-methyltransferase family. The protein in the C-terminal section; belongs to the DAO family. It depends on FAD as a cofactor.

Its subcellular location is the cytoplasm. It carries out the reaction 5-aminomethyl-2-thiouridine(34) in tRNA + S-adenosyl-L-methionine = 5-methylaminomethyl-2-thiouridine(34) in tRNA + S-adenosyl-L-homocysteine + H(+). Catalyzes the last two steps in the biosynthesis of 5-methylaminomethyl-2-thiouridine (mnm(5)s(2)U) at the wobble position (U34) in tRNA. Catalyzes the FAD-dependent demodification of cmnm(5)s(2)U34 to nm(5)s(2)U34, followed by the transfer of a methyl group from S-adenosyl-L-methionine to nm(5)s(2)U34, to form mnm(5)s(2)U34. The chain is tRNA 5-methylaminomethyl-2-thiouridine biosynthesis bifunctional protein MnmC from Shewanella baltica (strain OS195).